Consider the following 158-residue polypeptide: Cyclic pyranopterin monophosphate synthase (158 aa).

Substrate-binding positions include 76 to 78 (LCH) and 114 to 115 (ME). Residue D129 is part of the active site.

It belongs to the MoaC family. In terms of assembly, homohexamer; trimer of dimers.

It carries out the reaction (8S)-3',8-cyclo-7,8-dihydroguanosine 5'-triphosphate = cyclic pyranopterin phosphate + diphosphate. Its pathway is cofactor biosynthesis; molybdopterin biosynthesis. Catalyzes the conversion of (8S)-3',8-cyclo-7,8-dihydroguanosine 5'-triphosphate to cyclic pyranopterin monophosphate (cPMP). This chain is Cyclic pyranopterin monophosphate synthase, found in Shewanella frigidimarina (strain NCIMB 400).